The primary structure comprises 237 residues: NAD-dependent protein deacetylase (237 aa).

The Deacetylase sirtuin-type domain maps to 1–237 (MQDITQAEAI…TIFAELTIKE (237 aa)). NAD(+)-binding residues include alanine 25, threonine 29, arginine 37, glutamine 100, isoleucine 102, aspartate 103, and histidine 118. Isoleucine 102 and aspartate 103 together coordinate nicotinamide. The active-site Proton acceptor is histidine 118. Zn(2+) contacts are provided by cysteine 126, cysteine 129, histidine 144, and cysteine 147. NAD(+) is bound by residues threonine 185, serine 186, and asparagine 209.

This sequence belongs to the sirtuin family. Class U subfamily.

It localises to the cytoplasm. The catalysed reaction is N(6)-acetyl-L-lysyl-[protein] + NAD(+) + H2O = 2''-O-acetyl-ADP-D-ribose + nicotinamide + L-lysyl-[protein]. Functionally, NAD-dependent protein deacetylase which modulates the activities of several enzymes which are inactive in their acetylated form. The polypeptide is NAD-dependent protein deacetylase (Enterococcus faecalis (strain ATCC 700802 / V583)).